Here is a 222-residue protein sequence, read N- to C-terminus: Formimidoylglutamase (222 aa).

Residues H34, D59, H61, D63, D150, and D152 each contribute to the Mn(2+) site.

This sequence belongs to the arginase family. Requires Mn(2+) as cofactor.

The catalysed reaction is N-formimidoyl-L-glutamate + H2O = formamide + L-glutamate. The protein operates within amino-acid degradation; L-histidine degradation into L-glutamate; L-glutamate from N-formimidoyl-L-glutamate (hydrolase route): step 1/1. In terms of biological role, catalyzes the conversion of N-formimidoyl-L-glutamate to L-glutamate and formamide. In Klebsiella aerogenes (Enterobacter aerogenes), this protein is Formimidoylglutamase (hutG).